The chain runs to 78 residues: Structural DNA-binding protein p10 (78 aa).

Residues 1–25 show a composition bias toward low complexity; sequence MPTKAGTKSTANKKTTKGSSKSGSA. The disordered stretch occupies residues 1–41; the sequence is MPTKAGTKSTANKKTTKGSSKSGSARGHTGKTHAPPSMHSG.

It belongs to the asfivirus P10 family.

The protein resides in the virion. May play a role in genome packaging through direct interaction with viral DNA. Binds to ssDNA and dsDNA with the same apparent affinity in vitro. The protein is Structural DNA-binding protein p10 of African swine fever virus (isolate Warthog/Namibia/Wart80/1980) (ASFV).